Consider the following 352-residue polypeptide: Quinolinate synthase (352 aa).

The iminosuccinate site is built by H48 and S69. Residue C114 participates in [4Fe-4S] cluster binding. Iminosuccinate is bound by residues 140–142 (YAN) and S157. A [4Fe-4S] cluster-binding site is contributed by C201. Residues 227 to 229 (HPE) and T244 contribute to the iminosuccinate site. C298 is a binding site for [4Fe-4S] cluster.

The protein belongs to the quinolinate synthase family. Type 1 subfamily. The cofactor is [4Fe-4S] cluster.

Its subcellular location is the cytoplasm. It carries out the reaction iminosuccinate + dihydroxyacetone phosphate = quinolinate + phosphate + 2 H2O + H(+). Its pathway is cofactor biosynthesis; NAD(+) biosynthesis; quinolinate from iminoaspartate: step 1/1. In terms of biological role, catalyzes the condensation of iminoaspartate with dihydroxyacetone phosphate to form quinolinate. This Pseudomonas syringae pv. syringae (strain B728a) protein is Quinolinate synthase.